The primary structure comprises 265 residues: Novel plant SNARE 12 (265 aa).

The Cytoplasmic segment spans residues 1–217 (MASELPMSPH…IGRQVATDKC (217 aa)). The stretch at 32 to 106 (LDKIKDSSRQ…ALRKTYLNTL (75 aa)) forms a coiled coil. A Phosphoserine modification is found at S74. The region spanning 146–208 (MKRMDETDQA…KKASQLVKEI (63 aa)) is the t-SNARE coiled-coil homology domain. A helical; Anchor for type IV membrane protein transmembrane segment spans residues 218 to 238 (IMAFLFLIVCGVIAIIIVKIV). The Vesicular segment spans residues 239 to 265 (NPNNKDIRDIPGLAPPAQSRKLLYFRE).

It belongs to the novel plant SNARE family. As to expression, expressed in roots, stems, flower, siliques and leaves.

The protein resides in the membrane. Its function is as follows. Vesicle trafficking protein that functions in the secretory pathway. The polypeptide is Novel plant SNARE 12 (NPSN12) (Arabidopsis thaliana (Mouse-ear cress)).